A 632-amino-acid polypeptide reads, in one-letter code: RNA-binding post-transcriptional regulator csx1 (632 aa).

A phosphoserine; by MAPK sty1 mark is found at serine 42 and serine 54. A phosphoserine mark is found at serine 67 and serine 69. RRM domains follow at residues 85-167 and 182-261; these read DTLW…WATG and FSIF…VASP. Serine 291 bears the Phosphoserine; by MAPK sty1 mark. The region spanning 297–369 is the RRM 3 domain; the sequence is TTVFVGGLAS…SHIRLAWGHN (73 aa). A Phosphoserine; by MAPK sty1 modification is found at serine 455. The disordered stretch occupies residues 456-476; it reads PPPLSRSASISPTLSGSGSGL. A compositionally biased stretch (low complexity) spans 466-476; it reads SPTLSGSGSGL.

Interacts with cip1 and cip2.

It is found in the cytoplasm. Regulates global gene expression after oxidative stress. Interacts and stabilizes atf1 and pcr1 mRNAs after oxidative stress, thus controlling their turnover. The protein is RNA-binding post-transcriptional regulator csx1 (csx1) of Schizosaccharomyces pombe (strain 972 / ATCC 24843) (Fission yeast).